The following is a 410-amino-acid chain: Killer cell immunoglobulin-like receptor 3DL3 (410 aa).

The N-terminal stretch at 1 to 25 is a signal peptide; that stretch reads MSLMVVSMACVGFFLLEGPWPHVGG. Topologically, residues 26–322 are extracellular; sequence QDKPFLSAWP…VSVTGNSRHL (297 aa). 3 Ig-like C2-type domains span residues 42 to 97, 137 to 197, and 237 to 295; these read GQHV…RCCS, GETV…RCFG, and GENV…RCFG. 2 disulfide bridges follow: cysteine 49/cysteine 95 and cysteine 144/cysteine 195. Asparagine 179, asparagine 239, and asparagine 273 each carry an N-linked (GlcNAc...) asparagine glycan. Residues cysteine 244 and cysteine 293 are joined by a disulfide bond. A helical membrane pass occupies residues 323–343; that stretch reads HVLIGTSVVIIPFAILLFFLL. Over 344–410 the chain is Cytoplasmic; it reads HRWCANKKNA…PKTPPTDTSV (67 aa).

The protein belongs to the immunoglobulin superfamily.

The protein resides in the cell membrane. Its function is as follows. Receptor on natural killer cells. May inhibit the activity of NK cells thus preventing cell lysis. This Homo sapiens (Human) protein is Killer cell immunoglobulin-like receptor 3DL3 (KIR3DL3).